Consider the following 201-residue polypeptide: Recombination protein RecR (201 aa).

Residues 57-72 form a C4-type zinc finger; the sequence is CADCRTFTEQEVCNIC. The Toprim domain maps to 81 to 176; sequence GQICVVESPA…EASRIAHGVP (96 aa).

This sequence belongs to the RecR family.

May play a role in DNA repair. It seems to be involved in an RecBC-independent recombinational process of DNA repair. It may act with RecF and RecO. The sequence is that of Recombination protein RecR from Shigella boydii serotype 18 (strain CDC 3083-94 / BS512).